Reading from the N-terminus, the 524-residue chain is Ribonuclease Y (524 aa).

The helical transmembrane segment at 3-23 (IVINLFLIIFASVVFFAAGFF) threads the bilayer. The KH domain occupies 214-274 (ALSVVHIQSD…LRREHAKLTL (61 aa)). In terms of domain architecture, HD spans 340 to 432 (LLQHSREVAM…VDAANVISLA (93 aa)).

Belongs to the RNase Y family.

The protein resides in the cell membrane. Functionally, endoribonuclease that initiates mRNA decay. The sequence is that of Ribonuclease Y from Chlorobium luteolum (strain DSM 273 / BCRC 81028 / 2530) (Pelodictyon luteolum).